A 72-amino-acid polypeptide reads, in one-letter code: Hypotensin-1 (72 aa).

An N-terminal signal peptide occupies residues 1-24 (MKMMIPVIFSILLLIFSLSSTAMS). Residues 25 to 35 (LEDEQENMEER) constitute a propeptide that is removed on maturation. Ser-41 carries the phosphoserine modification. Residues 53–72 (ETNAKPPARFDPAAFEKSDD) are disordered. Residues 61 to 72 (RFDPAAFEKSDD) constitute a propeptide that is removed on maturation.

This sequence belongs to the non-disulfide-bridged peptide (NDBP) superfamily. Undergoes enzymatic cleavages by carboxypeptidases, endopeptidases, and aminopeptidases resulting in at least 46 fragments of this protein. Expressed by the venom gland.

It is found in the secreted. In terms of biological role, agonist of the B2 bradykinin receptor (BDKRB2). Potentiates the hypotensive effect of bradykinin (BK) and induces a direct vasorelaxing effect independent of BK, by endothelium- and nitric oxide (NO)-dependent mechanisms in rat aortic ring preparations. Also exerts proangiogenic, antiinflammatory, and antifibrogenic activities. Does not inhibit the angiotensin-converting enzyme (ACE) but increases its activity, and inhibits neprilysin (NEP) in a non-competitive manner. Exerts intermediate cytotoxicity and pro-inflammatory effects on mouse macrophages, and increases the phagocytic activity of these murine cells. Presents moderate hemolytic activity at physiological concentrations (micromolar range). Does not induce mast cell degranulation, lactate dehydrogenase (LDH) release from mast cells and antimicrobial effects. In vivo, causes intense pain (but no edema formation), when injected in mice hind paws. Also induces discomfort and anxiety in mice, as it moderately diminishes locomotion and moderately increases rearing behavior. The protein is Hypotensin-1 of Tityus serrulatus (Brazilian scorpion).